The primary structure comprises 413 residues: Aspartate kinase (413 aa).

2 ACT domains span residues 267-341 (LTIR…GDTK) and 347-413 (IVGV…RQGE).

This sequence belongs to the aspartokinase family. In terms of assembly, homotrimer. In the presence of inhibitory amino acids the Stokes radius of the protein increases, suggesting its oligomeric state may change.

Its subcellular location is the cytoplasm. It carries out the reaction L-aspartate + ATP = 4-phospho-L-aspartate + ADP. It functions in the pathway amino-acid biosynthesis; L-lysine biosynthesis via DAP pathway; (S)-tetrahydrodipicolinate from L-aspartate: step 1/4. The protein operates within amino-acid biosynthesis; L-methionine biosynthesis via de novo pathway; L-homoserine from L-aspartate: step 1/3. It participates in amino-acid biosynthesis; L-threonine biosynthesis; L-threonine from L-aspartate: step 1/5. With respect to regulation, activated by L-lysine, L-methionine, and L-isoleucine. L-threonine, at low concentrations, is a mild activator and has a weak inhibitory effect only at concentrations over 10 mM. Strongly feedback inhibited by the concerted combination of L-lysine and L-threonine and slightly feedback inhibited by the concerted combination of L-threonine and L-methionine. Activated by the combination of L-methionine and L-lysine, L-methionine and L-isoleucine and L-lysine and L-isoleucine. Involved in the biosynthesis of L-aspartate-beta-semialdehyde which is a central intermediate in the biosynthesis of different amino acids (L-lysine, L-methionine, L-threonine). Catalyzes the phosphorylation of the beta-carboxyl group of L-aspartate to yield 4-phospho-L-aspartate. The chain is Aspartate kinase from Pseudomonas fluorescens (strain SBW25).